Here is a 315-residue protein sequence, read N- to C-terminus: tRNA dimethylallyltransferase (315 aa).

Position 13–20 (13–20 (GPTASGKT)) interacts with ATP. A substrate-binding site is contributed by 15–20 (TASGKT). Interaction with substrate tRNA stretches follow at residues 38-41 (DSAL), 162-166 (QRLSR), 243-248 (RCVGYR), and 276-283 (KRQITWLR).

It belongs to the IPP transferase family. In terms of assembly, monomer. The cofactor is Mg(2+).

It carries out the reaction adenosine(37) in tRNA + dimethylallyl diphosphate = N(6)-dimethylallyladenosine(37) in tRNA + diphosphate. Functionally, catalyzes the transfer of a dimethylallyl group onto the adenine at position 37 in tRNAs that read codons beginning with uridine, leading to the formation of N6-(dimethylallyl)adenosine (i(6)A). The sequence is that of tRNA dimethylallyltransferase from Vibrio vulnificus (strain CMCP6).